The chain runs to 113 residues: Endoribonuclease SymE (113 aa).

The SpoVT-AbrB domain maps to 29 to 74 (SRYPDYSRIPAITLKGQWLEAAGFATGTAVVVKVMEGCIVLTAQPA).

Belongs to the SymE family.

It localises to the cytoplasm. In terms of biological role, involved in the degradation and recycling of damaged RNA. It is itself a target for degradation by the ATP-dependent protease Lon. This is Endoribonuclease SymE from Escherichia coli (strain ATCC 8739 / DSM 1576 / NBRC 3972 / NCIMB 8545 / WDCM 00012 / Crooks).